A 178-amino-acid polypeptide reads, in one-letter code: Large ribosomal subunit protein uL5 (178 aa).

This sequence belongs to the universal ribosomal protein uL5 family. Part of the 50S ribosomal subunit; part of the 5S rRNA/L5/L18/L25 subcomplex. Contacts the 5S rRNA and the P site tRNA. Forms a bridge to the 30S subunit in the 70S ribosome.

This is one of the proteins that bind and probably mediate the attachment of the 5S RNA into the large ribosomal subunit, where it forms part of the central protuberance. In the 70S ribosome it contacts protein S13 of the 30S subunit (bridge B1b), connecting the 2 subunits; this bridge is implicated in subunit movement. Contacts the P site tRNA; the 5S rRNA and some of its associated proteins might help stabilize positioning of ribosome-bound tRNAs. This Prochlorococcus marinus (strain MIT 9515) protein is Large ribosomal subunit protein uL5.